Here is a 96-residue protein sequence, read N- to C-terminus: MPEDNVIFVGNKPVMNYVLAAVTQFNEGAKEVTIKARGRAISRAVDTAEVVRHRFLTDVEIDRIQISTEELASEKGEKINVSSIEIFLKRPRAATD.

This sequence belongs to the histone-like Alba family.

It is found in the cytoplasm. The protein localises to the chromosome. Functionally, binds double-stranded DNA tightly but without sequence specificity. Involved in DNA compaction. The protein is DNA/RNA-binding protein Alba of Methanocella arvoryzae (strain DSM 22066 / NBRC 105507 / MRE50).